We begin with the raw amino-acid sequence, 427 residues long: Probable purple acid phosphatase 20 (427 aa).

An N-terminal signal peptide occupies residues 1 to 21 (MVKVLGLVAILLIVLAGNVLS). The N-linked (GlcNAc...) asparagine glycan is linked to Asn85. Fe cation contacts are provided by Asp147, Asp174, and Tyr177. A Zn(2+)-binding site is contributed by Asp174. Positions 207 and 291 each coordinate Zn(2+). Residue Asn207 coordinates substrate. His301 (proton donor) is an active-site residue. His330 lines the Zn(2+) pocket. 330-332 (HVH) contacts substrate. His332 is a Fe cation binding site. A glycan (N-linked (GlcNAc...) asparagine) is linked at Asn392.

Belongs to the metallophosphoesterase superfamily. Purple acid phosphatase family. Homodimer. Requires Fe cation as cofactor. Zn(2+) serves as cofactor. As to expression, expressed flowers and siliques.

It localises to the secreted. The enzyme catalyses a phosphate monoester + H2O = an alcohol + phosphate. This is Probable purple acid phosphatase 20 (PAP20) from Arabidopsis thaliana (Mouse-ear cress).